Here is a 246-residue protein sequence, read N- to C-terminus: MTFTILPAVDVVNGQAVRLDQGEAGTEKSYGTPLESALKWQEQGAKWLHFVDLDAAFNRGSNHEMMAEIVGKLDVDVELTGGIRDDESLERALATGARRVNIGTAALEKPEWIASAIQRYGEKIAVDIAVRLEDGEWRTRGNGWVSDGGDLWEVLERLDSQGCARFVVTDVSKDGTLSGPNVELLREVAAATDAPIVASGGISVLEDVLELAKYQDEGIDSVIIGKALYEHKFTLEEALAAVEKLG.

The active-site Proton acceptor is Asp-10.

It belongs to the HisA/HisF family.

Its subcellular location is the cytoplasm. The catalysed reaction is 1-(5-phospho-beta-D-ribosyl)-5-[(5-phospho-beta-D-ribosylamino)methylideneamino]imidazole-4-carboxamide = 5-[(5-phospho-1-deoxy-D-ribulos-1-ylimino)methylamino]-1-(5-phospho-beta-D-ribosyl)imidazole-4-carboxamide. It functions in the pathway amino-acid biosynthesis; L-histidine biosynthesis; L-histidine from 5-phospho-alpha-D-ribose 1-diphosphate: step 4/9. The polypeptide is 1-(5-phosphoribosyl)-5-[(5-phosphoribosylamino)methylideneamino] imidazole-4-carboxamide isomerase (hisA) (Corynebacterium glutamicum (strain ATCC 13032 / DSM 20300 / JCM 1318 / BCRC 11384 / CCUG 27702 / LMG 3730 / NBRC 12168 / NCIMB 10025 / NRRL B-2784 / 534)).